Consider the following 152-residue polypeptide: Endoribonuclease YbeY (152 aa).

Positions 117, 121, and 127 each coordinate Zn(2+).

Belongs to the endoribonuclease YbeY family. Zn(2+) is required as a cofactor.

It is found in the cytoplasm. Its function is as follows. Single strand-specific metallo-endoribonuclease involved in late-stage 70S ribosome quality control and in maturation of the 3' terminus of the 16S rRNA. The chain is Endoribonuclease YbeY from Borreliella afzelii (strain PKo) (Borrelia afzelii).